The sequence spans 276 residues: D-aminoacyl-tRNA deacylase (276 aa).

This sequence belongs to the DtdA deacylase family. In terms of assembly, monomer. Zn(2+) serves as cofactor.

The enzyme catalyses a D-aminoacyl-tRNA + H2O = a tRNA + a D-alpha-amino acid + H(+). It catalyses the reaction glycyl-tRNA(Ala) + H2O = tRNA(Ala) + glycine + H(+). Its function is as follows. D-aminoacyl-tRNA deacylase with broad substrate specificity. By recycling D-aminoacyl-tRNA to D-amino acids and free tRNA molecules, this enzyme counteracts the toxicity associated with the formation of D-aminoacyl-tRNA entities in vivo. The polypeptide is D-aminoacyl-tRNA deacylase (Staphylothermus marinus (strain ATCC 43588 / DSM 3639 / JCM 9404 / F1)).